Here is a 94-residue protein sequence, read N- to C-terminus: Large ribosomal subunit protein bL25 (94 aa).

Belongs to the bacterial ribosomal protein bL25 family. In terms of assembly, part of the 50S ribosomal subunit; part of the 5S rRNA/L5/L18/L25 subcomplex. Contacts the 5S rRNA. Binds to the 5S rRNA independently of L5 and L18.

In terms of biological role, this is one of the proteins that binds to the 5S RNA in the ribosome where it forms part of the central protuberance. In Sodalis glossinidius (strain morsitans), this protein is Large ribosomal subunit protein bL25.